The following is a 223-amino-acid chain: Ribonuclease 3 (223 aa).

The RNase III domain maps to 5-127 (LQRLEKKIGY…IIGAIYLDSD (123 aa)). Residue glutamate 40 coordinates Mg(2+). Residue aspartate 44 is part of the active site. Positions 113 and 116 each coordinate Mg(2+). Glutamate 116 is a catalytic residue. Residues 154–223 (DPKTRLQEYL…AADIALGQLN (70 aa)) form the DRBM domain.

The protein belongs to the ribonuclease III family. As to quaternary structure, homodimer. Requires Mg(2+) as cofactor.

The protein resides in the cytoplasm. The enzyme catalyses Endonucleolytic cleavage to 5'-phosphomonoester.. Functionally, digests double-stranded RNA. Involved in the processing of primary rRNA transcript to yield the immediate precursors to the large and small rRNAs (23S and 16S). Processes some mRNAs, and tRNAs when they are encoded in the rRNA operon. Processes pre-crRNA and tracrRNA of type II CRISPR loci if present in the organism. This is Ribonuclease 3 from Aliivibrio fischeri (strain ATCC 700601 / ES114) (Vibrio fischeri).